The following is a 278-amino-acid chain: Energy-coupling factor transporter ATP-binding protein EcfA1 (278 aa).

The region spanning 5 to 239 (LLLESVSYQY…QDKLEAAGID (235 aa)) is the ABC transporter domain. ATP is bound at residue 39-46 (GPNGSGKS).

Belongs to the ABC transporter superfamily. Energy-coupling factor EcfA family. Forms a stable energy-coupling factor (ECF) transporter complex composed of 2 membrane-embedded substrate-binding proteins (S component), 2 ATP-binding proteins (A component) and 2 transmembrane proteins (T component).

The protein localises to the cell membrane. Its function is as follows. ATP-binding (A) component of a common energy-coupling factor (ECF) ABC-transporter complex. Unlike classic ABC transporters this ECF transporter provides the energy necessary to transport a number of different substrates. The chain is Energy-coupling factor transporter ATP-binding protein EcfA1 from Halalkalibacterium halodurans (strain ATCC BAA-125 / DSM 18197 / FERM 7344 / JCM 9153 / C-125) (Bacillus halodurans).